Consider the following 1045-residue polypeptide: Endoglucanase B (1045 aa).

The first 33 residues, 1–33 (MLRQVPRTLVAGGSALAVAVGVLVAPLATGAAA), serve as a signal peptide directing secretion. Residues 34 to 492 (APTYNYAEAL…LASFPTPEQP (459 aa)) are catalytic. D91 (nucleophile) is an active-site residue. Residues H410, D449, and E458 contribute to the active site. The region spanning 493-642 (DGDQLFVEAM…STLVWGKEPT (150 aa)) is the CBM3 domain. Linker ('hinge') (Pro-Thr box) regions lie at residues 644–650 (TTTDTTP), 734–748 (AAVT…ETEP), 831–846 (APVT…DTVA), and 931–944 (SPVT…TSTP). 3 consecutive Fibronectin type-III domains span residues 653-743 (TPGT…TDTT), 751-840 (TPGT…TAAP), and 849-940 (VPGT…TLPV). The CBM2 domain occupies 939-1045 (PVTSTPSCTV…SFTVNGEVCG (107 aa)). An intrachain disulfide couples C946 to C1044.

The protein belongs to the glycosyl hydrolase 9 (cellulase E) family.

The enzyme catalyses Endohydrolysis of (1-&gt;4)-beta-D-glucosidic linkages in cellulose, lichenin and cereal beta-D-glucans.. Functionally, the biological conversion of cellulose to glucose generally requires three types of hydrolytic enzymes: (1) Endoglucanases which cut internal beta-1,4-glucosidic bonds; (2) Exocellobiohydrolases that cut the disaccharide cellobiose from the non-reducing end of the cellulose polymer chain; (3) Beta-1,4-glucosidases which hydrolyze the cellobiose and other short cello-oligosaccharides to glucose. The sequence is that of Endoglucanase B (cenB) from Cellulomonas fimi.